The primary structure comprises 569 residues: Cationic amino acid transporter 5 (569 aa).

The Cytoplasmic segment spans residues 1–67; sequence MEGEERGYWR…KQSEHEMKRC (67 aa). The chain crosses the membrane as a helical span at residues 68 to 88; sequence LTWWDLVWFGFGSVIGAGIFV. Over 89–97 the chain is Extracellular; the sequence is LTGQEAHEQ. Residues 98 to 118 traverse the membrane as a helical segment; sequence AGPAIVLSYVVSGLSAMLSVF. At 119-143 the chain is on the cytoplasmic side; it reads CYTEFAVEIPVAGGSFAYLRIELGD. The helical transmembrane segment at 144 to 164 threads the bilayer; that stretch reads FAAFITAGNILLESIVGTAAV. At 165–192 the chain is on the extracellular side; it reads ARAWTSYFATLLNRSPNALRIKTDLSSG. A helical membrane pass occupies residues 193–213; it reads FNLLDPIAVVVIAASATIASI. Residues 214–222 are Cytoplasmic-facing; sequence STRKTSLLN. The chain crosses the membrane as a helical span at residues 223 to 243; sequence WIASAINTLVIFFVIIAGFIH. Residues 244 to 251 are Extracellular-facing; sequence ADTSNLTP. A helical transmembrane segment spans residues 252–272; that stretch reads FLPFGPEGVFRAAAVVYFAYG. Residues 273–290 lie on the Cytoplasmic side of the membrane; it reads GFDSIATMAEETKNPSRD. Residues 291-311 traverse the membrane as a helical segment; it reads IPIGLLGSMSIITVIYCLMAL. Topologically, residues 312 to 341 are extracellular; that stretch reads SLSMMQKYTDIDPNAAYSVAFQSVGMKWGK. The helical transmembrane segment at 342-362 threads the bilayer; it reads YLVALGALKGMTTVLLVGALG. Residues 363 to 389 lie on the Cytoplasmic side of the membrane; that stretch reads QARYVTHIARTHMIPPIFALVHPKTGT. Residues 390 to 410 form a helical membrane-spanning segment; that stretch reads PINANLLVAIPSALIAFFSGL. Position 411 (D411) is a topological domain, extracellular. The helical transmembrane segment at 412–432 threads the bilayer; the sequence is VLASLLSISTLFIFTMMPIAL. At 433 to 450 the chain is on the cytoplasmic side; it reads LVRRYYVRQDTPRVHLIK. The helical transmembrane segment at 451–471 threads the bilayer; the sequence is LITCLLFVVVSSMGTSAYWGM. The Extracellular segment spans residues 472–477; it reads QRKGSW. The helical transmembrane segment at 478-498 threads the bilayer; it reads IGYTVTVPFWFLGTLGIVFFV. Residues 499 to 505 are Cytoplasmic-facing; it reads PQQRTPK. The chain crosses the membrane as a helical span at residues 506–526; it reads VWGVPLVPWLPCLSIATNIFL. The Extracellular segment spans residues 527 to 537; that stretch reads MGSLGAMAFVR. Residues 538–558 traverse the membrane as a helical segment; the sequence is FGVCTLAMLLYYFLLGLHATF. Over 559–569 the chain is Cytoplasmic; that stretch reads DMAHQQIVPRT.

The protein belongs to the amino acid-polyamine-organocation (APC) superfamily. Cationic amino acid transporter (CAT) (TC 2.A.3.3) family. In terms of tissue distribution, expressed in roots, stems, flowers, seeds, and leaves. Mostly present in leaf rims and cotyledons of developing seedlings.

The protein resides in the cell membrane. Its function is as follows. High-affinity permease involved in the transport of the cationic amino acids (e.g. arginine, and, to a lower extent, citrulline and glutamate). Transport mostly basic amino acids, and, to a lower extent neutral and acidic amino acids. This chain is Cationic amino acid transporter 5 (CAT5), found in Arabidopsis thaliana (Mouse-ear cress).